A 238-amino-acid chain; its full sequence is Enolase-phosphatase E1 (238 aa).

Residues Asp14 and Glu16 each contribute to the Mg(2+) site. Residues 128-129 (SS) and Lys165 each bind substrate. Asp192 serves as a coordination point for Mg(2+).

Belongs to the HAD-like hydrolase superfamily. MasA/MtnC family. Monomer. It depends on Mg(2+) as a cofactor.

The protein resides in the cytoplasm. Its subcellular location is the nucleus. It carries out the reaction 5-methylsulfanyl-2,3-dioxopentyl phosphate + H2O = 1,2-dihydroxy-5-(methylsulfanyl)pent-1-en-3-one + phosphate. The protein operates within amino-acid biosynthesis; L-methionine biosynthesis via salvage pathway; L-methionine from S-methyl-5-thio-alpha-D-ribose 1-phosphate: step 3/6. It functions in the pathway amino-acid biosynthesis; L-methionine biosynthesis via salvage pathway; L-methionine from S-methyl-5-thio-alpha-D-ribose 1-phosphate: step 4/6. Its function is as follows. Bifunctional enzyme that catalyzes the enolization of 2,3-diketo-5-methylthiopentyl-1-phosphate (DK-MTP-1-P) into the intermediate 2-hydroxy-3-keto-5-methylthiopentenyl-1-phosphate (HK-MTPenyl-1-P), which is then dephosphorylated to form the acireductone 1,2-dihydroxy-3-keto-5-methylthiopentene (DHK-MTPene). The chain is Enolase-phosphatase E1 from Fusarium vanettenii (strain ATCC MYA-4622 / CBS 123669 / FGSC 9596 / NRRL 45880 / 77-13-4) (Fusarium solani subsp. pisi).